The chain runs to 385 residues: Probable tRNA sulfurtransferase (385 aa).

A THUMP domain is found at 65–165; it reads AILQELFSFL…KEHFLVFTER (101 aa). ATP contacts are provided by residues 183-184, 208-209, arginine 267, glycine 285, and glutamine 294; these read LL and TF.

It belongs to the ThiI family.

Its subcellular location is the cytoplasm. It catalyses the reaction [ThiI sulfur-carrier protein]-S-sulfanyl-L-cysteine + a uridine in tRNA + 2 reduced [2Fe-2S]-[ferredoxin] + ATP + H(+) = [ThiI sulfur-carrier protein]-L-cysteine + a 4-thiouridine in tRNA + 2 oxidized [2Fe-2S]-[ferredoxin] + AMP + diphosphate. The catalysed reaction is [ThiS sulfur-carrier protein]-C-terminal Gly-Gly-AMP + S-sulfanyl-L-cysteinyl-[cysteine desulfurase] + AH2 = [ThiS sulfur-carrier protein]-C-terminal-Gly-aminoethanethioate + L-cysteinyl-[cysteine desulfurase] + A + AMP + 2 H(+). The protein operates within cofactor biosynthesis; thiamine diphosphate biosynthesis. Functionally, catalyzes the ATP-dependent transfer of a sulfur to tRNA to produce 4-thiouridine in position 8 of tRNAs, which functions as a near-UV photosensor. Also catalyzes the transfer of sulfur to the sulfur carrier protein ThiS, forming ThiS-thiocarboxylate. This is a step in the synthesis of thiazole, in the thiamine biosynthesis pathway. The sulfur is donated as persulfide by IscS. The protein is Probable tRNA sulfurtransferase of Mycoplasma genitalium (strain ATCC 33530 / DSM 19775 / NCTC 10195 / G37) (Mycoplasmoides genitalium).